We begin with the raw amino-acid sequence, 833 residues long: ERAD-associated E3 ubiquitin-protein ligase component HRD3 (833 aa).

The first 20 residues, 1–20 (MITLLLYLCVICNAIVLIRA), serve as a signal peptide directing secretion. N-linked (GlcNAc...) asparagine glycans are attached at residues asparagine 101, asparagine 123, and asparagine 142. The Sel1-like 1 repeat unit spans residues 103-139 (SEATYTLSQIHLWSQYNFPHNMTLAHKYLEKFNDLTH). Sel1-like repeat units lie at residues 143-186 (HSAI…QLGN), 187-222 (LKAK…EQLR), 413-445 (GRAC…KTQA), 552-595 (ETAQ…KQGN), 596-627 (IDAG…LKYS), and 628-663 (IQAI…EHDH). N-linked (GlcNAc...) asparagine glycosylation occurs at asparagine 429. Asparagine 611 carries an N-linked (GlcNAc...) asparagine glycan. The chain crosses the membrane as a helical span at residues 768–788 (LVTMGCILGIFLLSILMSTLA). Residues 805 to 824 (NGNRQQEQQQQQQAQGPPGW) are disordered. Positions 809-819 (QQEQQQQQQAQ) are enriched in low complexity.

It belongs to the sel-1 family. Component of the HRD1 ubiquitin ligase complex which contains the E3 ligase HRD1, its cofactors HRD3, USA1 and DER1, substrate recruiting factor YOS9 and CDC48-binding protein UBX2. Within the complex, interacts directly with HRD1 and YOS9 (via N-terminus). In ERAD-L, HRD3 and YOS9 jointly bind misfolded glycoproteins in the endoplasmic reticulum (ER) lumen. Movement of ERAD-L substrates through the ER membrane is facilitated by HRD1 and DER1 which have lateral gates facing each other and which distort the membrane region between the lateral gates, making it much thinner than a normal phospholipid bilayer. Substrates insert into the membrane as a hairpin loop with one strand interacting with DER1 and the other with HRD1. The HRD1 complex interacts with the heterotrimeric CDC48-NPL4-UFD1 ATPase complex which is recruited by UBX2 via its interaction with CDC48 and which moves ubiquitinated substrates to the cytosol for targeting to the proteasome. The HRD1 complex interacts with the ERAD substrates HMG1 and HMG2. Interacts with KAR2.

Its subcellular location is the endoplasmic reticulum membrane. Functionally, component of the endoplasmic reticulum quality control (ERQC) system involved in ubiquitin-dependent degradation of misfolded endoplasmic reticulum proteins. Component of the HRD1 ubiquitin ligase complex, which is part of the ERAD-L and ERAD-M pathways responsible for the rapid degradation of soluble lumenal and membrane proteins with misfolded lumenal domains (ERAD-L), or ER-membrane proteins with misfolded transmembrane domains (ERAD-M). ERAD-L substrates are ubiquitinated through HRD1 in conjunction with the E2 ubiquitin-conjugating enzymes UBC1 and UBC7-CUE1. Ubiquitinated substrates are then removed to the cytosol via the action of the CDC48-NPL4-UFD1 ATPase complex and targeted to the proteasome. ERAD-M substrates are processed by the same HRD1-HRD3 core complex, but only a subset of the other components is required for ERAD-M. Stabilizes the HRD1 ubiquitin-protein ligase. Also functions in recruiting misfolded protein substrates in conjunction with YOS9. This is ERAD-associated E3 ubiquitin-protein ligase component HRD3 (HRD3) from Saccharomyces cerevisiae (strain ATCC 204508 / S288c) (Baker's yeast).